The primary structure comprises 374 residues: Alcohol dehydrogenase S chain (374 aa).

At Ser-2 the chain carries N-acetylserine. Positions 47, 68, 98, 101, 104, 112, and 174 each coordinate Zn(2+). Residues 199-204 (GLGGVG), Asp-223, Lys-228, 292-294 (VGV), and Arg-369 contribute to the NAD(+) site.

It belongs to the zinc-containing alcohol dehydrogenase family. Class-I subfamily. Dimer of identical or non-identical chains of two types (E and S) coded by 2 separate genes at different loci. The cofactor is Zn(2+).

The protein resides in the cytoplasm. The catalysed reaction is a primary alcohol + NAD(+) = an aldehyde + NADH + H(+). It catalyses the reaction a secondary alcohol + NAD(+) = a ketone + NADH + H(+). In Equus caballus (Horse), this protein is Alcohol dehydrogenase S chain.